A 305-amino-acid polypeptide reads, in one-letter code: Protein FdhE homolog (305 aa).

Belongs to the FdhE family.

The protein localises to the cytoplasm. Functionally, necessary for formate dehydrogenase activity. This chain is Protein FdhE homolog, found in Haemophilus ducreyi (strain 35000HP / ATCC 700724).